The sequence spans 193 residues: Hypoxanthine/guanine phosphoribosyltransferase (193 aa).

It belongs to the purine/pyrimidine phosphoribosyltransferase family. Archaeal HPRT subfamily. In terms of assembly, homodimer.

It is found in the cytoplasm. The catalysed reaction is IMP + diphosphate = hypoxanthine + 5-phospho-alpha-D-ribose 1-diphosphate. It carries out the reaction GMP + diphosphate = guanine + 5-phospho-alpha-D-ribose 1-diphosphate. The protein operates within purine metabolism; IMP biosynthesis via salvage pathway; IMP from hypoxanthine: step 1/1. In terms of biological role, catalyzes a salvage reaction resulting in the formation of IMP that is energically less costly than de novo synthesis. Prefers hypoxanthine, has 66% activity with guanine while activity with adenine, xanthine, uracil, orotate, or cytosine is negligible. The protein is Hypoxanthine/guanine phosphoribosyltransferase of Methanothermobacter marburgensis (strain ATCC BAA-927 / DSM 2133 / JCM 14651 / NBRC 100331 / OCM 82 / Marburg) (Methanobacterium thermoautotrophicum).